Here is a 102-residue protein sequence, read N- to C-terminus: NADH-quinone oxidoreductase subunit K (102 aa).

3 helical membrane-spanning segments follow: residues 5 to 25 (LAHYLILGAILFAIGIFGIFL), 31 to 51 (IILLMSIELMLLAVNMNFVAF), and 62 to 82 (VFVFFILTVAAAEAAIGLAIL).

This sequence belongs to the complex I subunit 4L family. In terms of assembly, NDH-1 is composed of 14 different subunits. Subunits NuoA, H, J, K, L, M, N constitute the membrane sector of the complex.

It localises to the cell inner membrane. The enzyme catalyses a quinone + NADH + 5 H(+)(in) = a quinol + NAD(+) + 4 H(+)(out). Functionally, NDH-1 shuttles electrons from NADH, via FMN and iron-sulfur (Fe-S) centers, to quinones in the respiratory chain. The immediate electron acceptor for the enzyme in this species is believed to be ubiquinone. Couples the redox reaction to proton translocation (for every two electrons transferred, four hydrogen ions are translocated across the cytoplasmic membrane), and thus conserves the redox energy in a proton gradient. In Bordetella avium (strain 197N), this protein is NADH-quinone oxidoreductase subunit K.